The sequence spans 65 residues: Cytochrome b-c1 complex subunit 9, mitochondrial (65 aa).

The helical transmembrane segment at 14–34 (IYVATIFGGAFAFQGFFDVAV) threads the bilayer.

It belongs to the UQCR10/QCR9 family. As to quaternary structure, component of the ubiquinol-cytochrome c oxidoreductase (cytochrome b-c1 complex, complex III, CIII), a multisubunit enzyme composed of 10 subunits. The complex is composed of 3 respiratory subunits cytochrome b (COB), cytochrome c1 (CYT1) and Rieske protein (RIP1), 2 core protein subunits COR1 and QCR2, and 5 low-molecular weight protein subunits QCR6, QCR7, QCR8, QCR9 and QCR10. The complex exists as an obligatory dimer and forms supercomplexes (SCs) in the inner mitochondrial membrane with a monomer or a dimer of cytochrome c oxidase (complex IV, CIV), resulting in 2 different assemblies (supercomplexes III(2)IV and III(2)IV(2)).

Its subcellular location is the membrane. It is found in the mitochondrion inner membrane. In terms of biological role, component of the ubiquinol-cytochrome c oxidoreductase, a multisubunit transmembrane complex that is part of the mitochondrial electron transport chain which drives oxidative phosphorylation. The complex plays an important role in the uptake of multiple carbon sources present in different host niches. The sequence is that of Cytochrome b-c1 complex subunit 9, mitochondrial from Candida albicans (strain SC5314 / ATCC MYA-2876) (Yeast).